The chain runs to 215 residues: MTQSLADMRREYTRDGLSEANAPSDPFSLFRQWFDDAVKTERLPVEPNAMTLATVDADGHPHCRILLLKGLDERGFTFFTNYESAKGRQLAANPRAAMTFFWPALERQVRIEGEIEKVTAQESDAYYQVRPLGSRLGAWASPQSRVIADRAELERLLAETERRFADQAPSCPEHWGGYRLLPQRIEFWQGRPSRLHDRLDYRHQDGVWARERLAP.

Residues 9 to 12 (RREY) and Lys-69 contribute to the substrate site. FMN contacts are provided by residues 64–69 (RILLLK), 79–80 (FT), Lys-86, and Gln-108. Substrate-binding residues include Tyr-126, Arg-130, and Ser-134. FMN contacts are provided by residues 143 to 144 (QS) and Trp-188. Residue 194–196 (RLH) participates in substrate binding. Position 198 (Arg-198) interacts with FMN.

It belongs to the pyridoxamine 5'-phosphate oxidase family. Homodimer. FMN serves as cofactor.

The enzyme catalyses pyridoxamine 5'-phosphate + O2 + H2O = pyridoxal 5'-phosphate + H2O2 + NH4(+). The catalysed reaction is pyridoxine 5'-phosphate + O2 = pyridoxal 5'-phosphate + H2O2. It participates in cofactor metabolism; pyridoxal 5'-phosphate salvage; pyridoxal 5'-phosphate from pyridoxamine 5'-phosphate: step 1/1. It functions in the pathway cofactor metabolism; pyridoxal 5'-phosphate salvage; pyridoxal 5'-phosphate from pyridoxine 5'-phosphate: step 1/1. In terms of biological role, catalyzes the oxidation of either pyridoxine 5'-phosphate (PNP) or pyridoxamine 5'-phosphate (PMP) into pyridoxal 5'-phosphate (PLP). This is Pyridoxine/pyridoxamine 5'-phosphate oxidase from Pseudomonas paraeruginosa (strain DSM 24068 / PA7) (Pseudomonas aeruginosa (strain PA7)).